The following is a 711-amino-acid chain: Polyribonucleotide nucleotidyltransferase (711 aa).

The Mg(2+) site is built by aspartate 490 and aspartate 496. One can recognise a KH domain in the interval 556 to 615 (PRIETMQIPTDKIREVIGSGGKVIREIVEVSGAKVDINDEGIIKIASPNGEAIKKAYDMI). In terms of domain architecture, S1 motif spans 625–693 (GMVYTGTVVK…DRGKVRLSMK (69 aa)).

This sequence belongs to the polyribonucleotide nucleotidyltransferase family. The cofactor is Mg(2+).

It is found in the cytoplasm. It catalyses the reaction RNA(n+1) + phosphate = RNA(n) + a ribonucleoside 5'-diphosphate. In terms of biological role, involved in mRNA degradation. Catalyzes the phosphorolysis of single-stranded polyribonucleotides processively in the 3'- to 5'-direction. The protein is Polyribonucleotide nucleotidyltransferase of Roseobacter denitrificans (strain ATCC 33942 / OCh 114) (Erythrobacter sp. (strain OCh 114)).